The sequence spans 126 residues: Fluoride-specific ion channel FluC (126 aa).

Transmembrane regions (helical) follow at residues 3-23 (PYLL…RFLI), 37-57 (VGTL…ALYF), 68-88 (LVIT…LETV), and 101-121 (TNIT…MMLF). Residues G75 and T78 each contribute to the Na(+) site.

It belongs to the fluoride channel Fluc/FEX (TC 1.A.43) family.

Its subcellular location is the cell inner membrane. The catalysed reaction is fluoride(in) = fluoride(out). Its activity is regulated as follows. Na(+) is not transported, but it plays an essential structural role and its presence is essential for fluoride channel function. Its function is as follows. Fluoride-specific ion channel. Important for reducing fluoride concentration in the cell, thus reducing its toxicity. This chain is Fluoride-specific ion channel FluC, found in Sulfurovum sp. (strain NBC37-1).